A 396-amino-acid polypeptide reads, in one-letter code: Elongation factor Tu (396 aa).

In terms of domain architecture, tr-type G spans 11–205; the sequence is KPHVNIGTIG…VVDEYIPTPE (195 aa). Residues 20–27 are G1; the sequence is GHVDHGKT. Residue 20–27 participates in GTP binding; that stretch reads GHVDHGKT. A Mg(2+)-binding site is contributed by T27. Residues 61-65 are G2; the sequence is GITIN. Residues 82-85 form a G3 region; sequence DAPG. Residues 82–86 and 137–140 contribute to the GTP site; these read DAPGH and NKCD. Residues 137–140 form a G4 region; the sequence is NKCD. Positions 175–177 are G5; sequence SAL.

The protein belongs to the TRAFAC class translation factor GTPase superfamily. Classic translation factor GTPase family. EF-Tu/EF-1A subfamily. As to quaternary structure, monomer.

It localises to the cytoplasm. The enzyme catalyses GTP + H2O = GDP + phosphate + H(+). In terms of biological role, GTP hydrolase that promotes the GTP-dependent binding of aminoacyl-tRNA to the A-site of ribosomes during protein biosynthesis. The polypeptide is Elongation factor Tu (Lactobacillus delbrueckii subsp. bulgaricus (strain ATCC 11842 / DSM 20081 / BCRC 10696 / JCM 1002 / NBRC 13953 / NCIMB 11778 / NCTC 12712 / WDCM 00102 / Lb 14)).